The sequence spans 402 residues: Triose phosphate/phosphate translocator, non-green plastid, chloroplastic (402 aa).

Residues 1–82 (MQSSAVFSAS…SLDTNRFKTA (82 aa)) constitute a chloroplast transit peptide. Residues 83–98 (ATAVPEEGEGSGKMTK) lie on the Chloroplast intermembrane side of the membrane. A helical transmembrane segment spans residues 99-119 (VLELGLLFAMWYLFNIYFNIY). In terms of domain architecture, EamA spans 118-236 (IYNKQVLKAL…IVGGVALASV (119 aa)). Residues 120-131 (NKQVLKALHAPM) are Lumenal-facing. Residues 132-152 (TVTLVQFAVGSVLITFMWALN) traverse the membrane as a helical segment. Residues 153-209 (LYKRPKISAAQLAAILPLAVVHTLGNLFTNMSLGKVSVSFTHTIKAMEPFFSVVLSA) lie on the Chloroplast intermembrane side of the membrane. A helical membrane pass occupies residues 210–230 (MFLGEVPTPWVIGSIIPIVGG). At 231-278 (VALASVTEVSFNWAGFLSAMASNLTNQSRNVLSKKVMVKKDDSLDNIT) the chain is on the lumenal side. The chain crosses the membrane as a helical span at residues 279–298 (LFSIITLMSLFLMAPVTFFS). Over 299-374 (EGIKFTPSYI…IFFKTPVSPV (76 aa)) the chain is Chloroplast intermembrane. The chain crosses the membrane as a helical span at residues 375–394 (NAFGTGIALAGVFLYSRVKR). At 395–402 (IKPKPKTA) the chain is on the lumenal side.

Belongs to the TPT transporter family. TPT (TC 2.A.7.9) subfamily. As to quaternary structure, homodimer.

The protein localises to the plastid. Its subcellular location is the chloroplast membrane. Functionally, mediates the export of fixed carbons from the chloroplasts into the cytosol in the form of triose phosphates. In Brassica oleracea var. botrytis (Cauliflower), this protein is Triose phosphate/phosphate translocator, non-green plastid, chloroplastic (NGTPT).